Here is a 908-residue protein sequence, read N- to C-terminus: MVCEGKRLASCPCFFLLTAKFYWILTMMQRTHSQEYAHSIRVDGDIILGGLFPVHAKGERGVPCGELKKEKGIHRLEAMLYAIDQINKDPDLLSNITLGVRILDTCSRDTYALEQSLTFVQALIEKDASDVKCANGDPPIFTKPDKISGVIGAAASSVSIMVANILRLFKIPQISYASTAPELSDNTRYDFFSRVVPPDSYQAQAMVDIVTALGWNYVSTLASEGNYGESGVEAFTQISREIGGVCIAQSQKIPREPRPGEFEKIIKRLLETPNARAVIMFANEDDIRRILEAAKKLNQSGHFLWIGSDSWGSKIAPVYQQEEIAEGAVTILPKRASIDGFDRYFRSRTLANNRRNVWFAEFWEENFGCKLGSHGKRNSHIKKCTGLERIARDSSYEQEGKVQFVIDAVYSMAYALHNMHKERCPGYIGLCPRMVTIDGKELLGYIRAVNFNGSAGTPVTFNENGDAPGRYDIFQYQINNKSTEYKIIGHWTNQLHLKVEDMQWANREHTHPASVCSLPCKPGERKKTVKGVPCCWHCERCEGYNYQVDELSCELCPLDQRPNINRTGCQRIPIIKLEWHSPWAVVPVFIAILGIIATTFVIVTFVRYNDTPIVRASGRELSYVLLTGIFLCYSITFLMIAAPDTIICSFRRIFLGLGMCFSYAALLTKTNRIHRIFEQGKKSVTAPKFISPASQLVITFSLISVQLLGVFVWFVVDPPHTIIDYGEQRTLDPENARGVLKCDISDLSLICSLGYSILLMVTCTVYAIKTRGVPETFNEAKPIGFTMYTTCIIWLAFIPIFFGTAQSAEKMYIQTTTLTVSMSLSASVSLGMLYMPKVYIIIFHPEQNVQKRKRSFKAVVTAATMQSKLIQKGNDRPNGEVKSELCESLETNTSSTKTTYISYSNHSI.

Positions 1–33 are cleaved as a signal peptide; the sequence is MVCEGKRLASCPCFFLLTAKFYWILTMMQRTHS. At 34 to 583 the chain is on the extracellular side; it reads QEYAHSIRVD…IIKLEWHSPW (550 aa). A disulfide bond links cysteine 64 and cysteine 106. Asparagine 95 carries an N-linked (GlcNAc...) asparagine glycan. L-glutamate is bound by residues serine 156, 177–179, and tyrosine 227; that span reads AST. 7 cysteine pairs are disulfide-bonded: cysteine 246–cysteine 534, cysteine 369–cysteine 384, cysteine 424–cysteine 431, cysteine 516–cysteine 535, cysteine 520–cysteine 538, cysteine 541–cysteine 553, and cysteine 556–cysteine 569. N-linked (GlcNAc...) asparagine glycosylation occurs at asparagine 298. Aspartate 309 serves as a coordination point for L-glutamate. Lysine 401 contributes to the L-glutamate binding site. Residues asparagine 452 and asparagine 480 are each glycosylated (N-linked (GlcNAc...) asparagine). An N-linked (GlcNAc...) asparagine glycan is attached at asparagine 565. The chain crosses the membrane as a helical span at residues 584–608; sequence AVVPVFIAILGIIATTFVIVTFVRY. The Cytoplasmic segment spans residues 609–620; sequence NDTPIVRASGRE. Residues 621-641 traverse the membrane as a helical segment; the sequence is LSYVLLTGIFLCYSITFLMIA. Topologically, residues 642–647 are extracellular; the sequence is APDTII. A helical transmembrane segment spans residues 648 to 668; that stretch reads CSFRRIFLGLGMCFSYAALLT. Residues 669–695 are Cytoplasmic-facing; that stretch reads KTNRIHRIFEQGKKSVTAPKFISPASQ. Residues 696-716 traverse the membrane as a helical segment; the sequence is LVITFSLISVQLLGVFVWFVV. Topologically, residues 717–746 are extracellular; the sequence is DPPHTIIDYGEQRTLDPENARGVLKCDISD. A helical membrane pass occupies residues 747–768; that stretch reads LSLICSLGYSILLMVTCTVYAI. The Cytoplasmic segment spans residues 769–781; that stretch reads KTRGVPETFNEAK. A helical transmembrane segment spans residues 782–803; sequence PIGFTMYTTCIIWLAFIPIFFG. Over 804–818 the chain is Extracellular; sequence TAQSAEKMYIQTTTL. The chain crosses the membrane as a helical span at residues 819–843; that stretch reads TVSMSLSASVSLGMLYMPKVYIIIF. The Cytoplasmic portion of the chain corresponds to 844–908; sequence HPEQNVQKRK…TYISYSNHSI (65 aa). Lysine 882 is covalently cross-linked (Glycyl lysine isopeptide (Lys-Gly) (interchain with G-Cter in SUMO1)).

This sequence belongs to the G-protein coupled receptor 3 family. In terms of assembly, interacts with PICK1. Prominent expression in olfactory bulb, pontine gray, lateral reticular nucleus of the thalamus, and piriform cortex. Less abundant expression incerebral cortex, hippocampus, cerebellum, and mammillary body.

The protein resides in the cell membrane. Functionally, G-protein coupled receptor for glutamate. Ligand binding causes a conformation change that triggers signaling via guanine nucleotide-binding proteins (G proteins) and modulates the activity of down-stream effectors. Signaling inhibits adenylate cyclase activity. This chain is Metabotropic glutamate receptor 8 (Grm8), found in Rattus norvegicus (Rat).